Here is a 120-residue protein sequence, read N- to C-terminus: Chaperonin GroEL (120 aa).

Residue 23-27 (DGTTT) participates in ATP binding.

It belongs to the chaperonin (HSP60) family. Forms a cylinder of 14 subunits composed of two heptameric rings stacked back-to-back. Interacts with the co-chaperonin GroES.

Its subcellular location is the cytoplasm. The catalysed reaction is ATP + H2O + a folded polypeptide = ADP + phosphate + an unfolded polypeptide.. Its function is as follows. Together with its co-chaperonin GroES, plays an essential role in assisting protein folding. The GroEL-GroES system forms a nano-cage that allows encapsulation of the non-native substrate proteins and provides a physical environment optimized to promote and accelerate protein folding. This chain is Chaperonin GroEL, found in Mycolicibacterium fallax (Mycobacterium fallax).